A 37-amino-acid polypeptide reads, in one-letter code: M-oxotoxin-Ot2c (37 aa).

Expressed by the venom gland.

The protein localises to the secreted. Its function is as follows. Disrupts biological membranes, particularly those rich in phosphocholine. Has antimicrobial activity against Gram-negative bacterium E.coli, Gram-positive bacteria B.subtilis and S.aureus, and hemolytic activity against sheep, pig and guinea pig red blood cells. Has insecticidal activity against S.frugiperda ovarian cells by opening non-selective ion channels. Enhances the insecticidal activity of spider venom neurotoxic peptides. This is M-oxotoxin-Ot2c from Oxyopes takobius (Lynx spider).